A 117-amino-acid chain; its full sequence is Prefoldin subunit beta (117 aa).

The protein belongs to the prefoldin subunit beta family. Heterohexamer of two alpha and four beta subunits.

It localises to the cytoplasm. Molecular chaperone capable of stabilizing a range of proteins. Seems to fulfill an ATP-independent, HSP70-like function in archaeal de novo protein folding. This Methanosarcina barkeri (strain Fusaro / DSM 804) protein is Prefoldin subunit beta.